A 474-amino-acid polypeptide reads, in one-letter code: SHC-transforming protein 3 (474 aa).

The tract at residues 1 to 27 (MSATRKSRAGDEPLPRPPRGAPHTSDQ) is disordered. In terms of domain architecture, PID spans 29–214 (LGPGVTYVVK…LDEPWTEEEG (186 aa)). A CH1 region spans residues 215–378 (DGPDHPYYNS…RMLEELNAEP (164 aa)). Ser282 carries the phosphoserine modification. The segment at 308 to 328 (QPVPPQVWPAATSSTESSPRK) is disordered. One can recognise an SH2 domain in the interval 379 to 470 (WYQGEMSRKE…GSELCLQQPV (92 aa)).

In terms of assembly, interacts with the Trk receptors in a phosphotyrosine-dependent manner. Once activated, binds to GRB2. Interacts with activated EGF receptors. In terms of processing, tyrosine phosphorylated. Predominantly expressed in the adult brain.

Functionally, signaling adapter that couples activated growth factor receptors to signaling pathway in neurons. Involved in the signal transduction pathways of neurotrophin-activated Trk receptors in cortical neurons. The chain is SHC-transforming protein 3 (Shc3) from Mus musculus (Mouse).